The following is a 239-amino-acid chain: Uridylate kinase (239 aa).

10–13 (KLSG) is an ATP binding site. Residue Gly52 coordinates UMP. Residues Gly53 and Arg57 each contribute to the ATP site. UMP contacts are provided by residues Asp72 and 133–140 (TGNPFFTT). ATP-binding residues include Thr160, Tyr166, and Asp169.

Belongs to the UMP kinase family. As to quaternary structure, homohexamer.

It localises to the cytoplasm. The enzyme catalyses UMP + ATP = UDP + ADP. It participates in pyrimidine metabolism; CTP biosynthesis via de novo pathway; UDP from UMP (UMPK route): step 1/1. With respect to regulation, inhibited by UTP. Functionally, catalyzes the reversible phosphorylation of UMP to UDP. The polypeptide is Uridylate kinase (Porphyromonas gingivalis (strain ATCC BAA-308 / W83)).